Here is a 279-residue protein sequence, read N- to C-terminus: Release factor glutamine methyltransferase (279 aa).

2 residues coordinate S-adenosyl-L-methionine: Asp139 and Asn182. 182 to 185 (NPPY) provides a ligand contact to substrate.

The protein belongs to the protein N5-glutamine methyltransferase family. PrmC subfamily.

It carries out the reaction L-glutaminyl-[peptide chain release factor] + S-adenosyl-L-methionine = N(5)-methyl-L-glutaminyl-[peptide chain release factor] + S-adenosyl-L-homocysteine + H(+). In terms of biological role, methylates the class 1 translation termination release factors RF1/PrfA and RF2/PrfB on the glutamine residue of the universally conserved GGQ motif. The chain is Release factor glutamine methyltransferase from Thermodesulfovibrio yellowstonii (strain ATCC 51303 / DSM 11347 / YP87).